The following is a 926-amino-acid chain: Isoleucine--tRNA ligase (926 aa).

The 'HIGH' region motif lies at 57–67 (PYANGNIHMGH). Position 555 (Glu-555) interacts with L-isoleucyl-5'-AMP. The 'KMSKS' region motif lies at 596–600 (KMSKS). Residue Lys-599 participates in ATP binding. Residues Cys-897, Cys-900, Cys-914, and Cys-917 each coordinate Zn(2+).

The protein belongs to the class-I aminoacyl-tRNA synthetase family. IleS type 1 subfamily. Monomer. Zn(2+) serves as cofactor.

The protein localises to the cytoplasm. The enzyme catalyses tRNA(Ile) + L-isoleucine + ATP = L-isoleucyl-tRNA(Ile) + AMP + diphosphate. Catalyzes the attachment of isoleucine to tRNA(Ile). As IleRS can inadvertently accommodate and process structurally similar amino acids such as valine, to avoid such errors it has two additional distinct tRNA(Ile)-dependent editing activities. One activity is designated as 'pretransfer' editing and involves the hydrolysis of activated Val-AMP. The other activity is designated 'posttransfer' editing and involves deacylation of mischarged Val-tRNA(Ile). In Natranaerobius thermophilus (strain ATCC BAA-1301 / DSM 18059 / JW/NM-WN-LF), this protein is Isoleucine--tRNA ligase.